The following is a 279-amino-acid chain: Thymidylate synthase (279 aa).

132 to 133 (RR) is a binding site for dUMP. C153 serves as the catalytic Nucleophile. DUMP contacts are provided by residues 178–181 (RSND), N189, and 219–221 (HIY). D181 is a binding site for (6R)-5,10-methylene-5,6,7,8-tetrahydrofolate. A278 provides a ligand contact to (6R)-5,10-methylene-5,6,7,8-tetrahydrofolate.

It belongs to the thymidylate synthase family. Bacterial-type ThyA subfamily. As to quaternary structure, homodimer.

Its subcellular location is the cytoplasm. It catalyses the reaction dUMP + (6R)-5,10-methylene-5,6,7,8-tetrahydrofolate = 7,8-dihydrofolate + dTMP. It functions in the pathway pyrimidine metabolism; dTTP biosynthesis. Its function is as follows. Catalyzes the reductive methylation of 2'-deoxyuridine-5'-monophosphate (dUMP) to 2'-deoxythymidine-5'-monophosphate (dTMP) while utilizing 5,10-methylenetetrahydrofolate (mTHF) as the methyl donor and reductant in the reaction, yielding dihydrofolate (DHF) as a by-product. This enzymatic reaction provides an intracellular de novo source of dTMP, an essential precursor for DNA biosynthesis. The sequence is that of Thymidylate synthase from Lactococcus lactis subsp. cremoris (strain SK11).